A 197-amino-acid polypeptide reads, in one-letter code: Recombination protein RecR (197 aa).

Residues 56–71 (CQQCRTLTEQALCNIC) form a C4-type zinc finger. A Toprim domain is found at 79–174 (KELCIVETPA…KVSRIAHGIP (96 aa)).

Belongs to the RecR family.

In terms of biological role, may play a role in DNA repair. It seems to be involved in an RecBC-independent recombinational process of DNA repair. It may act with RecF and RecO. The sequence is that of Recombination protein RecR from Saccharophagus degradans (strain 2-40 / ATCC 43961 / DSM 17024).